Reading from the N-terminus, the 2621-residue chain is Nonribosomal peptide synthetase dtpA (2621 aa).

Residues 446 to 844 are adenylation 1; it reads CMEQPNAEAI…GRKDQQVKIR (399 aa). The 77-residue stretch at 978-1054 folds into the Carrier 1 domain; it reads QPYTQVEETL…EVALYSRALS (77 aa). Ser-1015 carries the post-translational modification O-(pantetheine 4'-phosphoryl)serine. Residues 1095 to 1506 are condensation 1; it reads EDIYPCTALQ…LNQLELAGPQ (412 aa). Residues 1534-1930 are adenylation 2; that stretch reads SRTQPGASAI…GRRDNQVKLR (397 aa). The region spanning 2071-2147 is the Carrier 2 domain; that stretch reads QPSTTQEALV…LFCTNASTSI (77 aa). An O-(pantetheine 4'-phosphoryl)serine modification is found at Ser-2108. A condensation 2 region spans residues 2220–2618; it reads AIFKLHGSKV…HSARPIASID (399 aa).

The protein belongs to the NRP synthetase family.

It functions in the pathway alkaloid biosynthesis. Functionally, nonribosomal peptide synthetase; part of the gene cluster that mediates the biosynthesis of the dimeric diketopiperazine alkaloid ditryptophenaline. The nonribosomal peptide synthase dtpA accepts L-tryptophan and L-phenylalanine as its substrates and forms the phenylalanyl-tryptophanyl cyclic dipeptide product cyclophenylalanyltryptophenyl. The N-methyltransferase dtpB is responsible for the N-methylation of cyclophenylalanyltryptophenyl to yield cyclo-N-methylphenylalanyltryptophenyl. The cytochrome P450 monooxygenase is responsible not only for pyrroloindole ring formation but also for concurrent dimerization of N-methylphenylalanyltryptophanyl diketopiperazine monomers into a homodimeric product. This Aspergillus flavus (strain ATCC 200026 / FGSC A1120 / IAM 13836 / NRRL 3357 / JCM 12722 / SRRC 167) protein is Nonribosomal peptide synthetase dtpA.